We begin with the raw amino-acid sequence, 319 residues long: Acyl-coenzyme A thioesterase 8 (319 aa).

Positions 1–20 (MSSPQAPEDGQGCGDRGDPP) are disordered. Catalysis depends on charge relay system residues Asp-232, Ser-254, and Gln-304. The short motif at 317-319 (SKL) is the Microbody targeting signal element.

This sequence belongs to the C/M/P thioester hydrolase family. Homodimer. As to quaternary structure, (Microbial infection) Interacts with human immunodeficiency virus (HIV-1) Nef (via middle region); this interaction enhances ACOT8 Acyl-CoA thioesterase activity and occurs in a Nef myristoylation-independent manner. According to a second report, the interaction with HIV-1 Nef occurs in a Nef myristoylation-independent manner but does not enhance ACOT8 Acyl-CoA thioesterase activity. Detected in a T-cell line (at protein level). Ubiquitous.

It localises to the peroxisome matrix. The catalysed reaction is choloyl-CoA + H2O = cholate + CoA + H(+). It catalyses the reaction chenodeoxycholoyl-CoA + H2O = chenodeoxycholate + CoA + H(+). The enzyme catalyses acetyl-CoA + H2O = acetate + CoA + H(+). It carries out the reaction butanoyl-CoA + H2O = butanoate + CoA + H(+). The catalysed reaction is 2-methylpropanoyl-CoA + H2O = 2-methylpropanoate + CoA + H(+). It catalyses the reaction hexanoyl-CoA + H2O = hexanoate + CoA + H(+). The enzyme catalyses octanoyl-CoA + H2O = octanoate + CoA + H(+). It carries out the reaction decanoyl-CoA + H2O = decanoate + CoA + H(+). The catalysed reaction is dodecanoyl-CoA + H2O = dodecanoate + CoA + H(+). It catalyses the reaction tetradecanoyl-CoA + H2O = tetradecanoate + CoA + H(+). The enzyme catalyses hexadecanoyl-CoA + H2O = hexadecanoate + CoA + H(+). It carries out the reaction octadecanoyl-CoA + H2O = octadecanoate + CoA + H(+). The catalysed reaction is malonyl-CoA + H2O = malonate + CoA + H(+). It catalyses the reaction acetoacetyl-CoA + H2O = acetoacetate + CoA + H(+). The enzyme catalyses propanoyl-CoA + H2O = propanoate + CoA + H(+). It carries out the reaction succinyl-CoA + H2O = succinate + CoA + H(+). The catalysed reaction is glutaryl-CoA + H2O = glutarate + CoA + H(+). It catalyses the reaction hexanedioyl-CoA + H2O = hexanedioate + CoA + H(+). The enzyme catalyses octanedioyl-CoA + H2O = octanedioate + CoA + H(+). It carries out the reaction decanedioyl-CoA + H2O = decanedioate + CoA + H(+). The catalysed reaction is dodecanedioyl-CoA + H2O = dodecanedioate + CoA + H(+). It catalyses the reaction (9Z)-tetradecenoyl-CoA + H2O = (9Z)-tetradecenoate + CoA + H(+). The enzyme catalyses (9Z)-hexadecenoyl-CoA + H2O = (9Z)-hexadecenoate + CoA + H(+). It carries out the reaction (9Z)-octadecenoyl-CoA + H2O = (9Z)-octadecenoate + CoA + H(+). The catalysed reaction is (9Z,12Z)-octadecadienoyl-CoA + H2O = (9Z,12Z)-octadecadienoate + CoA + H(+). It catalyses the reaction eicosanoyl-CoA + H2O = eicosanoate + CoA + H(+). The enzyme catalyses (5Z,8Z,11Z,14Z)-eicosatetraenoyl-CoA + H2O = (5Z,8Z,11Z,14Z)-eicosatetraenoate + CoA + H(+). It carries out the reaction 4,8-dimethylnonanoyl-CoA + H2O = 4,8-dimethylnonanoate + CoA + H(+). The catalysed reaction is 2,6-dimethylheptanoyl-CoA + H2O = 2,6-dimethylheptanoate + CoA + H(+). It catalyses the reaction (3S)-3-hydroxy-3-methylglutaryl-CoA + H2O = 3-hydroxy-3-methylglutarate + CoA + H(+). The enzyme catalyses 3alpha,7alpha,12alpha-trihydroxy-5beta-cholestan-26-oyl-CoA + H2O = 3alpha,7alpha,12alpha-trihydroxy-5beta-cholestan-26-oate + CoA + H(+). It carries out the reaction 2-methyloctadecanoyl-CoA + H2O = 2-methyloctadecanoate + CoA + H(+). The catalysed reaction is prostaglandin F2alpha-CoA + H2O = prostaglandin F2alpha + CoA + H(+). It participates in lipid metabolism; fatty acid metabolism. With respect to regulation, inhibited by CoASH (IC(50)=10-15 uM). Also inhibited by cysteine-reactive agents. Its function is as follows. Catalyzes the hydrolysis of acyl-CoAs into free fatty acids and coenzyme A (CoASH), regulating their respective intracellular levels. Displays no strong substrate specificity with respect to the carboxylic acid moiety of Acyl-CoAs. Hydrolyzes medium length (C2 to C20) straight-chain, saturated and unsaturated acyl-CoAS but is inactive towards substrates with longer aliphatic chains. Moreover, it catalyzes the hydrolysis of CoA esters of bile acids, such as choloyl-CoA and chenodeoxycholoyl-CoA and competes with bile acid CoA:amino acid N-acyltransferase (BAAT). Is also able to hydrolyze CoA esters of dicarboxylic acids. It is involved in the metabolic regulation of peroxisome proliferation. (Microbial infection) May mediate Nef-induced down-regulation of CD4 cell-surface expression. In Homo sapiens (Human), this protein is Acyl-coenzyme A thioesterase 8 (ACOT8).